A 158-amino-acid chain; its full sequence is S-ribosylhomocysteine lyase (158 aa).

Residues H57, H61, and C125 each contribute to the Fe cation site.

It belongs to the LuxS family. In terms of assembly, homodimer. Requires Fe cation as cofactor.

It carries out the reaction S-(5-deoxy-D-ribos-5-yl)-L-homocysteine = (S)-4,5-dihydroxypentane-2,3-dione + L-homocysteine. Functionally, involved in the synthesis of autoinducer 2 (AI-2) which is secreted by bacteria and is used to communicate both the cell density and the metabolic potential of the environment. The regulation of gene expression in response to changes in cell density is called quorum sensing. Catalyzes the transformation of S-ribosylhomocysteine (RHC) to homocysteine (HC) and 4,5-dihydroxy-2,3-pentadione (DPD). This Deinococcus radiodurans (strain ATCC 13939 / DSM 20539 / JCM 16871 / CCUG 27074 / LMG 4051 / NBRC 15346 / NCIMB 9279 / VKM B-1422 / R1) protein is S-ribosylhomocysteine lyase.